We begin with the raw amino-acid sequence, 559 residues long: GTP diphosphokinase CRSH2, chloroplastic (559 aa).

The N-terminal 37 residues, 1 to 37 (MASAGGEVVVVDPAAAAVAPDVEHHAPAPRLTPAGSG), are a transit peptide targeting the chloroplast. The region spanning 87–187 (SLARALIVAA…LELAIRLDAM (101 aa)) is the HD domain. EF-hand domains lie at 449-484 (ASAG…LGAG) and 486-518 (KDAE…VELK). Ca(2+) contacts are provided by Asp-462, Asn-464, Asp-466, Arg-468, Glu-473, Asp-496, Asn-498, Asp-500, Ser-502, and Glu-507.

Belongs to the RelA/SpoT family. Expressed in shoots.

Its subcellular location is the plastid. The protein localises to the chloroplast. It carries out the reaction GTP + ATP = guanosine 3'-diphosphate 5'-triphosphate + AMP. Activated by calcium. In terms of biological role, possesses calcium-dependent ppGpp (guanosine 3'-diphosphate 5'-diphosphate) synthetase activity in vitro and is able to functionally complement E.coli relA mutants. May be involved in a rapid plant ppGpp-mediated response to pathogens and other stresses. The sequence is that of GTP diphosphokinase CRSH2, chloroplastic from Oryza sativa subsp. japonica (Rice).